Here is a 347-residue protein sequence, read N- to C-terminus: Heat-inducible transcription repressor HrcA (347 aa).

This sequence belongs to the HrcA family.

Negative regulator of class I heat shock genes (grpE-dnaK-dnaJ and groELS operons). Prevents heat-shock induction of these operons. In Mycoplasmopsis pulmonis (strain UAB CTIP) (Mycoplasma pulmonis), this protein is Heat-inducible transcription repressor HrcA.